The primary structure comprises 540 residues: Ipecac alkaloid beta-glucosidase 9 (540 aa).

Residues Q36, H140, 185–186 (NE), Y350, E421, W470, and F486 contribute to the a beta-D-glucoside site. The Proton donor role is filled by E186. E421 functions as the Nucleophile in the catalytic mechanism.

It belongs to the glycosyl hydrolase 1 family.

The protein localises to the cytoplasm. It localises to the cytosol. It catalyses the reaction deacetylipecoside + H2O = deacetylipecoside aglycone + D-glucose. The enzyme catalyses deacetylisoipecoside + H2O = deacetylisoipecoside aglycone + D-glucose. Its pathway is alkaloid biosynthesis. Beta-glucosidase catalyzing deglucosylation on N-deacetylisoipecoside and N-deacetylipecoside. In Carapichea ipecacuanha (Ipecac), this protein is Ipecac alkaloid beta-glucosidase 9.